The primary structure comprises 159 residues: Small ribosomal subunit protein uS9 (159 aa).

The protein belongs to the universal ribosomal protein uS9 family.

The polypeptide is Small ribosomal subunit protein uS9 (Rickettsia massiliae (strain Mtu5)).